Reading from the N-terminus, the 1123-residue chain is Adenylyl cyclase X E (1123 aa).

The Cytoplasmic portion of the chain corresponds to 1 to 47 (MPRSLGNCQLNYSKERMWEPGYLKAKCAELRLESEFRLYRIRLWKSY). The chain crosses the membrane as a helical span at residues 48 to 68 (LLTFFMLHIFVTSVHCALLLA). The Extracellular segment spans residues 69–73 (TIERR). Residues 74 to 94 (SIIYFDVALSIGCALVLILVL) traverse the membrane as a helical segment. The Cytoplasmic portion of the chain corresponds to 95 to 106 (SVNFCDEFIAKH). Residues 107–127 (TWYMYASSIFASLTLVFADLT) form a helical membrane-spanning segment. Residues 128-137 (ESIYHTYAHS) are Extracellular-facing. A helical membrane pass occupies residues 138-158 (WILGTFYDTYIIYMIYMFLPI). At 159–163 (HFISG) the chain is on the cytoplasmic side. A helical transmembrane segment spans residues 164–184 (AVLLALLVSGLYILYFVIFIA). Topologically, residues 185 to 196 (QGFAQFASALFS) are extracellular. The helical transmembrane segment at 197-217 (VGGMSVDIVHYLCLNLVGIFY) threads the bilayer. Over 218-581 (RVMNDTVVRS…YLKQTDYMYK (364 aa)) the chain is Cytoplasmic. ATP is bound by residues 346 to 348 (LGD) and Arg392. Residue Asp348 participates in Mg(2+) binding. Residues 582–602 (YSIILSASVGCSLVYIELMDT) form a helical membrane-spanning segment. The Extracellular segment spans residues 603–608 (QMICSS). The helical transmembrane segment at 609–629 (CFVLPASVATIQCILALIAWY) threads the bilayer. The Cytoplasmic portion of the chain corresponds to 630 to 667 (KKYCWTRYGRNNVPHHYNGFSCFIFRIHDKILNSLPIR). A helical membrane pass occupies residues 668-688 (ICIYLFLMISSFFVMCLIVMS). The Extracellular segment spans residues 689 to 719 (CQREEFEMAYIEERLFHYEQEAHICFHPWVT). A helical transmembrane segment spans residues 720-740 (TNMLSLMICLTFTFAHIPIMV). The Cytoplasmic segment spans residues 741–743 (KTA). A helical membrane pass occupies residues 744–764 (VAILETLAYLLLIFFQFDFVF). Residues 765-772 (HHSVTTNP) are Extracellular-facing. A helical transmembrane segment spans residues 773–793 (YFKSEYAHALLICITFLIMFV). Residues 794–1123 (KERQIEFTNK…STSRHTLQSL (330 aa)) are Cytoplasmic-facing. ATP is bound by residues Lys903, 1014-1016 (DIW), 1021-1025 (NMASR), and Lys1061.

This sequence belongs to the adenylyl cyclase class-4/guanylyl cyclase family. Expressed in labella.

The protein localises to the membrane. The enzyme catalyses ATP = 3',5'-cyclic AMP + diphosphate. Catalyzes the formation of the signaling molecule cAMP in response to G-protein signaling. This is Adenylyl cyclase X E from Drosophila melanogaster (Fruit fly).